The following is a 98-amino-acid chain: NADH-ubiquinone oxidoreductase chain 4L (98 aa).

3 helical membrane passes run 1–21, 29–49, and 61–81; these read MSLV…GLLM, ALLC…LTIL, and IILL…LVTI.

It belongs to the complex I subunit 4L family. As to quaternary structure, core subunit of respiratory chain NADH dehydrogenase (Complex I) which is composed of 45 different subunits.

The protein localises to the mitochondrion inner membrane. The catalysed reaction is a ubiquinone + NADH + 5 H(+)(in) = a ubiquinol + NAD(+) + 4 H(+)(out). Core subunit of the mitochondrial membrane respiratory chain NADH dehydrogenase (Complex I) which catalyzes electron transfer from NADH through the respiratory chain, using ubiquinone as an electron acceptor. Part of the enzyme membrane arm which is embedded in the lipid bilayer and involved in proton translocation. The sequence is that of NADH-ubiquinone oxidoreductase chain 4L (MT-ND4L) from Ziphius cavirostris (Cuvier's beaked whale).